The following is a 160-amino-acid chain: Small ribosomal subunit protein uS10m (160 aa).

The protein belongs to the universal ribosomal protein uS10 family. As to quaternary structure, component of the mitochondrial ribosome small subunit (28S) which comprises a 12S rRNA and about 30 distinct proteins.

It localises to the mitochondrion. This Mus musculus (Mouse) protein is Small ribosomal subunit protein uS10m (Mrps10).